An 83-amino-acid polypeptide reads, in one-letter code: Small ribosomal subunit protein uS17 (83 aa).

This sequence belongs to the universal ribosomal protein uS17 family. As to quaternary structure, part of the 30S ribosomal subunit.

Functionally, one of the primary rRNA binding proteins, it binds specifically to the 5'-end of 16S ribosomal RNA. The chain is Small ribosomal subunit protein uS17 from Acaryochloris marina (strain MBIC 11017).